The chain runs to 192 residues: Phosphoheptose isomerase (192 aa).

The SIS domain occupies 37-192 (LADSFKAGGK…IQLIEKEMVK (156 aa)). 52 to 54 (NGG) lines the substrate pocket. The Zn(2+) site is built by H61 and E65. Substrate-binding positions include E65, 93-94 (ND), 119-121 (STS), S124, and Q172. Residues Q172 and H180 each contribute to the Zn(2+) site.

Belongs to the SIS family. GmhA subfamily. As to quaternary structure, homotetramer. The cofactor is Zn(2+).

The protein localises to the cytoplasm. It catalyses the reaction 2 D-sedoheptulose 7-phosphate = D-glycero-alpha-D-manno-heptose 7-phosphate + D-glycero-beta-D-manno-heptose 7-phosphate. It functions in the pathway carbohydrate biosynthesis; D-glycero-D-manno-heptose 7-phosphate biosynthesis; D-glycero-alpha-D-manno-heptose 7-phosphate and D-glycero-beta-D-manno-heptose 7-phosphate from sedoheptulose 7-phosphate: step 1/1. Catalyzes the isomerization of sedoheptulose 7-phosphate in D-glycero-D-manno-heptose 7-phosphate. This chain is Phosphoheptose isomerase, found in Shigella dysenteriae serotype 1 (strain Sd197).